Consider the following 655-residue polypeptide: tRNA-guanine(15) transglycosylase (655 aa).

The active-site Nucleophile is the D89. Substrate contacts are provided by D124 and A195. C281, C283, and C286 together coordinate Zn(2+). The PUA domain occupies 577 to 652 (KYRVVVNKEA…LAVKVRGGLK (76 aa)).

The protein belongs to the archaeosine tRNA-ribosyltransferase family. Zn(2+) is required as a cofactor.

The enzyme catalyses guanosine(15) in tRNA + 7-cyano-7-deazaguanine = 7-cyano-7-carbaguanosine(15) in tRNA + guanine. It functions in the pathway tRNA modification; archaeosine-tRNA biosynthesis. Functionally, exchanges the guanine residue with 7-cyano-7-deazaguanine (preQ0) at position 15 in the dihydrouridine loop (D-loop) of archaeal tRNAs. Can also utilize guanine as substrate. The polypeptide is tRNA-guanine(15) transglycosylase (Methanocaldococcus jannaschii (strain ATCC 43067 / DSM 2661 / JAL-1 / JCM 10045 / NBRC 100440) (Methanococcus jannaschii)).